The chain runs to 503 residues: Anhydrotetracycline monooxygenase (503 aa).

Belongs to the PheA/TfdB FAD monooxygenase family. Requires FAD as cofactor.

It carries out the reaction anhydrotetracycline + NADPH + O2 + H(+) = 5a,11a-dehydrotetracycline + NADP(+) + H2O. It functions in the pathway antibiotic biosynthesis; oxytetracycline biosynthesis. Catalyzes hydroxylation of the anthracycline structure at position C-6 during the biosynthesis of oxytetracyline. This Streptomyces rimosus protein is Anhydrotetracycline monooxygenase.